The following is a 125-amino-acid chain: Scinderin (125 aa).

At tyrosine 13 the chain carries Phosphotyrosine. Residues 23–30 (KGGLKYKA) and 49–57 (RLLHVKGRR) each bind a 1,2-diacyl-sn-glycero-3-phospho-(1D-myo-inositol-4,5-bisphosphate). One copy of the Gelsolin-like 1 repeat lies at 59-99 (VRATEVPLSWDSFNKGDCFIIDLGSEIYQWFGSSCNKYERL).

The protein belongs to the villin/gelsolin family.

Its subcellular location is the cytoplasm. It is found in the cytoskeleton. It localises to the cell projection. The protein resides in the podosome. Functionally, ca(2+)-dependent actin filament-severing protein that has a regulatory function in exocytosis by affecting the organization of the microfilament network underneath the plasma membrane. In vitro, also has barbed end capping and nucleating activities in the presence of Ca(2+). Severing activity is inhibited by phosphatidylinositol 4,5-bis-phosphate (PIP2). Required for megakaryocyte differentiation, maturation, polyploidization and apoptosis with the release of platelet-like particles. Plays a role in osteoclastogenesis (OCG) and actin cytoskeletal organization in osteoclasts. Regulates chondrocyte proliferation and differentiation. Inhibits cell proliferation and tumorigenesis. Signaling is mediated by MAPK, p38 and JNK pathways. This is Scinderin (SCIN) from Sus scrofa (Pig).